A 272-amino-acid chain; its full sequence is Phosphatidylglycerol--prolipoprotein diacylglyceryl transferase (272 aa).

4 consecutive transmembrane segments (helical) span residues isoleucine 21–alanine 41, tyrosine 60–tyrosine 80, glycine 101–alanine 121, and valine 131–glycine 151. Arginine 152 is a binding site for a 1,2-diacyl-sn-glycero-3-phospho-(1'-sn-glycerol). 3 helical membrane-spanning segments follow: residues proline 181 to tyrosine 201, glycine 209 to phenylalanine 229, and leucine 244 to valine 264.

The protein belongs to the Lgt family.

It localises to the cell inner membrane. It carries out the reaction L-cysteinyl-[prolipoprotein] + a 1,2-diacyl-sn-glycero-3-phospho-(1'-sn-glycerol) = an S-1,2-diacyl-sn-glyceryl-L-cysteinyl-[prolipoprotein] + sn-glycerol 1-phosphate + H(+). The protein operates within protein modification; lipoprotein biosynthesis (diacylglyceryl transfer). In terms of biological role, catalyzes the transfer of the diacylglyceryl group from phosphatidylglycerol to the sulfhydryl group of the N-terminal cysteine of a prolipoprotein, the first step in the formation of mature lipoproteins. This Aliarcobacter butzleri (strain RM4018) (Arcobacter butzleri) protein is Phosphatidylglycerol--prolipoprotein diacylglyceryl transferase.